The following is a 189-amino-acid chain: MGIDINHKWDRKVRRTKPKSLDVYLRLLVKLYRFLYRRTHKKFNKIILRRLFMSRTNQPPISLSRVAKLMKLRGKDENTIAVVVGTVTNDDRKLYCPKMNVCALRVTEKARERILKWGGKIYTFDQLALVAPTGKNTVLMQGERTAREAFTHFGRAPGVPHSNTRPYVQSKGRKYEKARGRRSSCGFKN.

The protein belongs to the eukaryotic ribosomal protein eL18 family.

Its subcellular location is the cytoplasm. The chain is Large ribosomal subunit protein eL18 (RpL18) from Aedes aegypti (Yellowfever mosquito).